The primary structure comprises 965 residues: Sarcosine oxidase subunit alpha (965 aa).

Ala-139, Asp-158, Glu-159, Arg-160, Thr-166, Val-205, Ala-418, Leu-423, and Thr-425 together coordinate NAD(+). Positions 692 and 784 each coordinate (6R)-5,10-methylene-5,6,7,8-tetrahydrofolate.

This sequence belongs to the GcvT family. As to quaternary structure, heterotetramer composed of subunits alpha (SoxA), beta (SoxB), gamma (SoxG) and delta (SoxD). The cofactor is NAD(+).

Its subcellular location is the cytoplasm. The catalysed reaction is sarcosine + (6S)-5,6,7,8-tetrahydrofolate + O2 = (6R)-5,10-methylene-5,6,7,8-tetrahydrofolate + glycine + H2O2. It catalyses the reaction sarcosine + O2 + H2O = formaldehyde + glycine + H2O2. Inhibited by Zn(2+), Cu(2+), Cd(2+), Hg(2+), Ag(+), p-chloromercuribenzoate (p-CMB), iodoacetamide, N-ethylmaleimide, CN(-), o-phenanthroline and sodium lauryl sulfate. In the presence of tetrahydrofolate, catalyzes the oxidative demethylation of sarcosine to yield glycine, 5,10-methylenetetrahydrofolate and hydrogen peroxide. In the absence of tetrahydrofolate, catalyzes the oxidative demethylation of sarcosine to yield glycine, formaldehyde and hydrogen peroxide. Can also use N-methyl-L-alanine and N-ethyl-L-glycine. Is very specific for oxygen as an acceptor. The protein is Sarcosine oxidase subunit alpha of Corynebacterium sp. (strain U-96).